Reading from the N-terminus, the 439-residue chain is Rho GTPase-activating protein 1 (439 aa).

Met1 bears the N-acetylmethionine mark. The segment covering 28–48 (IDEKNWPSDEMPDFPKSDDSK) has biased composition (basic and acidic residues). Residues 28–52 (IDEKNWPSDEMPDFPKSDDSKSSSP) form a disordered region. Phosphoserine is present on residues Ser44, Ser47, Ser50, and Ser51. The region spanning 63–218 (PYYDIARHQI…QVLKYDDFLK (156 aa)) is the CRAL-TRIO domain. Position 65 is a phosphotyrosine (Tyr65). Lys80 carries the N6-acetyllysine modification. The SH3-binding signature appears at 228 to 238 (PKPMPPRPPLP). In terms of domain architecture, Rho-GAP spans 244-431 (VSLQHLQEKN…FLLDHQGELF (188 aa)).

In terms of assembly, found in a complex with XPO7, EIF4A1, ARHGAP1, VPS26A, VPS29, VPS35 and SFN. Interacts with BNIPL. As to expression, ubiquitous.

The protein resides in the cytoplasm. In terms of biological role, GTPase activator for the Rho, Rac and Cdc42 proteins, converting them to the putatively inactive GDP-bound state. Cdc42 seems to be the preferred substrate. This is Rho GTPase-activating protein 1 (ARHGAP1) from Homo sapiens (Human).